The chain runs to 494 residues: MFLAKSIVCLALLAVANAQFDTNYASGRSGMVHLFEWKWDDIAAECENFLGPNGYAGVQVSPVNENAVKDSRPWWERYQPISYKLETRSGNEEQFASMVKRCNAVGVRTYVDVVFNHMAADGGTYGTGGSTASPSSKSYPGVPYSSLDFNPTCAISNYNDANEVRNCELVGLRDLNQGNSYVQDKVVEFLDHLIDLGVAGFRVDAAKHMWPADLAVIYGRLKNLNTDHGFASGSKAYIVQEVIDMGGEAISKSEYTGLGAITEFRHSDSIGKVFRGKDQLQYLTNWGTAWGFAASDRSLVFVDNHDNQRGHGAGGADVLTYKVPKQYKMASAFMLAHPFGTPRVMSSFSFTDTDQGPPTTDGHNIASPIFNSDNSCSGGWVCEHRWRQIYNMVAFRNTVGSDEIQNWWDNGSNQISFSRGSRGFVAFNNDNYDLNSSLQTGLPAGTYCDVISGSKSGSSCTGKTVTVGSDGRASINIGSSEDDGVLAIHVNAKL.

The first 18 residues, 1–18, serve as a signal peptide directing secretion; sequence MFLAKSIVCLALLAVANA. Pyrrolidone carboxylic acid is present on Gln19. A disulfide bond links Cys46 and Cys102. Ca(2+) is bound by residues Asn116, Arg165, and Asp174. A disulfide bridge connects residues Cys153 and Cys167. Position 202 (Arg202) interacts with chloride. The active-site Nucleophile is the Asp204. His208 contacts Ca(2+). The Proton donor role is filled by Glu241. The chloride site is built by Asn304 and Arg343. 2 disulfide bridges follow: Cys376/Cys382 and Cys448/Cys460.

The protein belongs to the glycosyl hydrolase 13 family. Monomer. It depends on Ca(2+) as a cofactor. Requires chloride as cofactor.

It catalyses the reaction Endohydrolysis of (1-&gt;4)-alpha-D-glucosidic linkages in polysaccharides containing three or more (1-&gt;4)-alpha-linked D-glucose units.. This chain is Alpha-amylase A (Amy-p), found in Drosophila melanogaster (Fruit fly).